We begin with the raw amino-acid sequence, 100 residues long: Small ribosomal subunit protein uS14c (100 aa).

The protein belongs to the universal ribosomal protein uS14 family. As to quaternary structure, part of the 30S ribosomal subunit.

Its subcellular location is the plastid. It is found in the chloroplast. In terms of biological role, binds 16S rRNA, required for the assembly of 30S particles. This Buxus microphylla (Littleleaf boxwood) protein is Small ribosomal subunit protein uS14c.